A 345-amino-acid chain; its full sequence is Dihydroorotase (345 aa).

The Zn(2+) site is built by His-13 and His-15. Residues 15–17 (HLR) and Asn-41 each bind substrate. Positions 99, 136, and 174 each coordinate Zn(2+). An N6-carboxylysine modification is found at Lys-99. His-136 lines the substrate pocket. Leu-219 provides a ligand contact to substrate. Residue Asp-247 participates in Zn(2+) binding. Asp-247 is a catalytic residue. Substrate-binding residues include His-251 and Ala-263.

This sequence belongs to the metallo-dependent hydrolases superfamily. DHOase family. Class II DHOase subfamily. In terms of assembly, homodimer. It depends on Zn(2+) as a cofactor.

The catalysed reaction is (S)-dihydroorotate + H2O = N-carbamoyl-L-aspartate + H(+). It functions in the pathway pyrimidine metabolism; UMP biosynthesis via de novo pathway; (S)-dihydroorotate from bicarbonate: step 3/3. Its function is as follows. Catalyzes the reversible cyclization of carbamoyl aspartate to dihydroorotate. The polypeptide is Dihydroorotase (Agrobacterium fabrum (strain C58 / ATCC 33970) (Agrobacterium tumefaciens (strain C58))).